Here is a 164-residue protein sequence, read N- to C-terminus: MAISVAASSSMAVMVPRVPAVSTRCSAVPYLPPRSFGRSSFTVPLKLVSGNGLQKVELLKTRASSEETSSIDTNELITDLKEKWDGLENKSTVLIYGGGAIVAVWLSSIVVGAINSVPLLPKVMELVGLGYTGWFVYRYLLFKSSRKELAEDIESLKKKIAGSE.

The N-terminal 62 residues, 1–62 (MAISVAASSS…LQKVELLKTR (62 aa)), are a transit peptide targeting the chloroplast. Position 63 is an N-acetylalanine (alanine 63). The Stromal segment spans residues 63 to 93 (ASSEETSSIDTNELITDLKEKWDGLENKSTV). The chain crosses the membrane as a helical span at residues 94-114 (LIYGGGAIVAVWLSSIVVGAI). At 115 to 116 (NS) the chain is on the lumenal side. The helical transmembrane segment at 117 to 137 (VPLLPKVMELVGLGYTGWFVY) threads the bilayer. The Stromal segment spans residues 138–164 (RYLLFKSSRKELAEDIESLKKKIAGSE). Residues 140 to 164 (LLFKSSRKELAEDIESLKKKIAGSE) are a coiled coil.

This sequence belongs to the CURT family. Homo- and heterodimers and trimers.

The protein localises to the plastid. It is found in the chloroplast. Its subcellular location is the plastoglobule. The protein resides in the membrane. It localises to the chloroplast thylakoid membrane. In terms of biological role, determines thylakoid architecture by inducing membrane curvature. The protein is Protein CURVATURE THYLAKOID 1A, chloroplastic (CURT1A) of Arabidopsis thaliana (Mouse-ear cress).